We begin with the raw amino-acid sequence, 500 residues long: Toluene-4-monooxygenase system, hydroxylase component subunit alpha (500 aa).

Glu104, Glu134, His137, Glu197, Glu231, and His234 together coordinate Fe cation.

Belongs to the TmoA/XamoA family. In terms of assembly, the alkene monooxygenase multicomponent enzyme system is composed of an electron transfer component and a monooxygenase component interacting with the effector protein TmoD. The electron transfer component is composed of a ferredoxin reductase (TmoF) and a ferredoxin (TmoC), and the monooxygenase component is formed by a heterohexamer (dimer of heterotrimers) of two alpha subunits (TmoA), two beta subunits (TmoE) and two gamma subunits (TmoB). The cofactor is Fe(2+).

The catalysed reaction is toluene + NADH + O2 + H(+) = 4-methylphenol + NAD(+) + H2O. The protein operates within xenobiotic degradation; toluene degradation. Inhibited by Zn(2+) and Cu(2+). Component of the toluene-4-monooxygenase multicomponent enzyme system which catalyzes the O2- and NADH-dependent hydroxylation of toluene to form p-cresol. Also able to convert benzene to phenol, catechol, and 1,2,3-trihydroxybenzene by successive hydroxylations. This Ectopseudomonas mendocina (Pseudomonas mendocina) protein is Toluene-4-monooxygenase system, hydroxylase component subunit alpha.